The chain runs to 284 residues: tRNA-cytidine(32) 2-sulfurtransferase (284 aa).

Positions 1–11 are enriched in polar residues; the sequence is MTFHQPVSETA. The segment at 1–20 is disordered; the sequence is MTFHQPVSETAQPDEASGHP. The short motif at 63-68 is the PP-loop motif element; the sequence is SGGKDS. [4Fe-4S] cluster-binding residues include cysteine 138, cysteine 141, and cysteine 229.

This sequence belongs to the TtcA family. In terms of assembly, homodimer. Mg(2+) is required as a cofactor. [4Fe-4S] cluster serves as cofactor.

The protein resides in the cytoplasm. It carries out the reaction cytidine(32) in tRNA + S-sulfanyl-L-cysteinyl-[cysteine desulfurase] + AH2 + ATP = 2-thiocytidine(32) in tRNA + L-cysteinyl-[cysteine desulfurase] + A + AMP + diphosphate + H(+). It participates in tRNA modification. In terms of biological role, catalyzes the ATP-dependent 2-thiolation of cytidine in position 32 of tRNA, to form 2-thiocytidine (s(2)C32). The sulfur atoms are provided by the cysteine/cysteine desulfurase (IscS) system. This is tRNA-cytidine(32) 2-sulfurtransferase from Chelativorans sp. (strain BNC1).